The chain runs to 502 residues: Glycerol kinase (502 aa).

Residue Thr-13 participates in ADP binding. Positions 13, 14, and 15 each coordinate ATP. Thr-13 contributes to the sn-glycerol 3-phosphate binding site. Residue Arg-17 coordinates ADP. 4 residues coordinate sn-glycerol 3-phosphate: Arg-83, Glu-84, Tyr-136, and Asp-246. Positions 83, 84, 136, 246, and 247 each coordinate glycerol. Residues Thr-268 and Gly-311 each contribute to the ADP site. Positions 268, 311, 315, and 412 each coordinate ATP. Residues Gly-412 and Asn-416 each contribute to the ADP site.

Belongs to the FGGY kinase family.

The enzyme catalyses glycerol + ATP = sn-glycerol 3-phosphate + ADP + H(+). The protein operates within polyol metabolism; glycerol degradation via glycerol kinase pathway; sn-glycerol 3-phosphate from glycerol: step 1/1. With respect to regulation, inhibited by fructose 1,6-bisphosphate (FBP). In terms of biological role, key enzyme in the regulation of glycerol uptake and metabolism. Catalyzes the phosphorylation of glycerol to yield sn-glycerol 3-phosphate. This Francisella tularensis subsp. tularensis (strain FSC 198) protein is Glycerol kinase.